The primary structure comprises 348 residues: Galactose-1-phosphate uridylyltransferase (348 aa).

Position 28-31 (28-31 (RAKR)) interacts with UDP-alpha-D-glucose. Positions 52 and 55 each coordinate Zn(2+). Residues Val61 and 77-78 (ND) each bind UDP-alpha-D-glucose. His115 contributes to the Zn(2+) binding site. UDP-alpha-D-glucose-binding positions include Asn153 and 159–161 (GCS). His164 contacts Zn(2+). His166 (tele-UMP-histidine intermediate) is an active-site residue. Gln168 provides a ligand contact to UDP-alpha-D-glucose. Positions 182, 281, 296, and 298 each coordinate Fe cation. Residues 311–312 (KF), 316–317 (YE), and Gln323 contribute to the UDP-alpha-D-glucose site.

This sequence belongs to the galactose-1-phosphate uridylyltransferase type 1 family. Zn(2+) is required as a cofactor.

The enzyme catalyses alpha-D-galactose 1-phosphate + UDP-alpha-D-glucose = alpha-D-glucose 1-phosphate + UDP-alpha-D-galactose. The protein operates within carbohydrate metabolism; galactose metabolism. The chain is Galactose-1-phosphate uridylyltransferase (galT) from Salmonella typhimurium (strain LT2 / SGSC1412 / ATCC 700720).